We begin with the raw amino-acid sequence, 750 residues long: Photosystem I P700 chlorophyll a apoprotein A1 (750 aa).

The next 8 membrane-spanning stretches (helical) occupy residues 70–93, 156–179, 195–219, 291–309, 346–369, 385–411, 433–455, and 531–549; these read VFSAHFGQLSIIFLWLSGMYFHGA, LYCTAIGALVFAALMLFAGWFHYH, LNHHLAGLLGLGSLSWAGHQVHVSL, IAHHHLAIAILFLIAGHMY, WHAQLALNLAMLGSLTIVVAHHMY, LSLFTHHMWIGGFLIVGAAAHAAIFMV, AIISHLNWVCIFLGFHSFGLYIH, and FLVHHIHAFTIHVTVLILL. Residues Cys-573 and Cys-582 each coordinate [4Fe-4S] cluster. 2 consecutive transmembrane segments (helical) span residues 589 to 610 and 664 to 686; these read HVFLGLFWMYNAISVVIFHFSW and LSAYGLFFLGAHFVWAFSLMFLF. His-675 is a chlorophyll a' binding site. 2 residues coordinate chlorophyll a: Met-683 and Tyr-691. Trp-692 contributes to the phylloquinone binding site. A helical membrane pass occupies residues 724 to 744; it reads AVGVTHYLLGGIATTWAFFLA.

The protein belongs to the PsaA/PsaB family. The PsaA/B heterodimer binds the P700 chlorophyll special pair and subsequent electron acceptors. PSI consists of a core antenna complex that captures photons, and an electron transfer chain that converts photonic excitation into a charge separation. The eukaryotic PSI reaction center is composed of at least 11 subunits. P700 is a chlorophyll a/chlorophyll a' dimer, A0 is one or more chlorophyll a, A1 is one or both phylloquinones and FX is a shared 4Fe-4S iron-sulfur center. serves as cofactor.

The protein localises to the plastid. The protein resides in the chloroplast thylakoid membrane. The catalysed reaction is reduced [plastocyanin] + hnu + oxidized [2Fe-2S]-[ferredoxin] = oxidized [plastocyanin] + reduced [2Fe-2S]-[ferredoxin]. In terms of biological role, psaA and PsaB bind P700, the primary electron donor of photosystem I (PSI), as well as the electron acceptors A0, A1 and FX. PSI is a plastocyanin-ferredoxin oxidoreductase, converting photonic excitation into a charge separation, which transfers an electron from the donor P700 chlorophyll pair to the spectroscopically characterized acceptors A0, A1, FX, FA and FB in turn. Oxidized P700 is reduced on the lumenal side of the thylakoid membrane by plastocyanin. The protein is Photosystem I P700 chlorophyll a apoprotein A1 of Nymphaea alba (White water-lily).